The following is a 486-amino-acid chain: Probable glycine dehydrogenase (decarboxylating) subunit 2 (486 aa).

The segment at 1 to 26 (MLIFESSRPGRQARAQAPKPTAATND) is disordered. Lys264 is modified (N6-(pyridoxal phosphate)lysine).

The protein belongs to the GcvP family. C-terminal subunit subfamily. The glycine cleavage system is composed of four proteins: P, T, L and H. In this organism, the P 'protein' is a heterodimer of two subunits. It depends on pyridoxal 5'-phosphate as a cofactor.

The enzyme catalyses N(6)-[(R)-lipoyl]-L-lysyl-[glycine-cleavage complex H protein] + glycine + H(+) = N(6)-[(R)-S(8)-aminomethyldihydrolipoyl]-L-lysyl-[glycine-cleavage complex H protein] + CO2. Functionally, the glycine cleavage system catalyzes the degradation of glycine. The P protein binds the alpha-amino group of glycine through its pyridoxal phosphate cofactor; CO(2) is released and the remaining methylamine moiety is then transferred to the lipoamide cofactor of the H protein. The polypeptide is Probable glycine dehydrogenase (decarboxylating) subunit 2 (Nitrosococcus oceani (strain ATCC 19707 / BCRC 17464 / JCM 30415 / NCIMB 11848 / C-107)).